A 225-amino-acid chain; its full sequence is Octanoyltransferase (225 aa).

The BPL/LPL catalytic domain maps to G43–G225. Residues R82 to H89, A157 to G159, and G170 to S172 each bind substrate. The active-site Acyl-thioester intermediate is C188.

This sequence belongs to the LipB family.

Its subcellular location is the cytoplasm. It carries out the reaction octanoyl-[ACP] + L-lysyl-[protein] = N(6)-octanoyl-L-lysyl-[protein] + holo-[ACP] + H(+). Its pathway is protein modification; protein lipoylation via endogenous pathway; protein N(6)-(lipoyl)lysine from octanoyl-[acyl-carrier-protein]: step 1/2. Catalyzes the transfer of endogenously produced octanoic acid from octanoyl-acyl-carrier-protein onto the lipoyl domains of lipoate-dependent enzymes. Lipoyl-ACP can also act as a substrate although octanoyl-ACP is likely to be the physiological substrate. The protein is Octanoyltransferase of Parvibaculum lavamentivorans (strain DS-1 / DSM 13023 / NCIMB 13966).